The chain runs to 867 residues: Leucine--tRNA ligase (867 aa).

The short motif at 42-52 (PYPSGKLHMGH) is the 'HIGH' region element. A 'KMSKS' region motif is present at residues 631–635 (KMSKS). Lys-634 serves as a coordination point for ATP.

It belongs to the class-I aminoacyl-tRNA synthetase family.

It is found in the cytoplasm. The catalysed reaction is tRNA(Leu) + L-leucine + ATP = L-leucyl-tRNA(Leu) + AMP + diphosphate. The chain is Leucine--tRNA ligase from Dichelobacter nodosus (strain VCS1703A).